A 153-amino-acid chain; its full sequence is Ubiquitin-conjugating enzyme E2 ubc-18 (153 aa).

The region spanning 2 to 149 is the UBC core domain; it reads SATRRLQKEL…AEEHTRKHAE (148 aa). The active-site Glycyl thioester intermediate is C86.

It belongs to the ubiquitin-conjugating enzyme family. Interacts with E3 ubiquitin-protein ligase wwp-1. Interacts with RBR-type E3 ubiquitin transferase ari-1.1. As to expression, expressed in neurons localized in the head and tail of adults.

The enzyme catalyses S-ubiquitinyl-[E1 ubiquitin-activating enzyme]-L-cysteine + [E2 ubiquitin-conjugating enzyme]-L-cysteine = [E1 ubiquitin-activating enzyme]-L-cysteine + S-ubiquitinyl-[E2 ubiquitin-conjugating enzyme]-L-cysteine.. Functionally, ubiquitin-conjugating enzyme E2. Accepts ubiquitin from the E1 complex and catalyzes its covalent attachment to other proteins. Required for diet restriction-mediated lifespan extension, probably acting as part of a complex with ubiquitin-protein ligase wwp-1. Acts redundantly with lin-35/Rb in the regulation of pharyngeal morphogenesis during embryonic development by negatively regulating the expression of proteins such as sup-35. The protein is Ubiquitin-conjugating enzyme E2 ubc-18 of Caenorhabditis elegans.